Reading from the N-terminus, the 133-residue chain is Homeobox protein BarH-like 2 (133 aa).

Positions 1–46 (ELEKEFQKQKYLSTPDRLDLAQSLGLTQLQVKTWYQNRRMKWKKMV) form a DNA-binding region, homeobox. The disordered stretch occupies residues 45–133 (MVLKGGQEAP…VTSPEPPPSS (89 aa)).

This sequence belongs to the BAR homeobox family. Expressed in keratinizing epithelia such as wool follicle, tongue and esophagus. Expressed at low level in thymus. Not detected in spleen, skeletal muscle, brain, heart kidney, liver and lung.

The protein localises to the nucleus. In terms of biological role, transcription factor. Binds optimally to the DNA consensus sequence 5'-YYTAATGRTTTTY-3'. May control the expression of neural adhesion molecules such as L1 or Ng-CAM during embryonic development of both the central and peripherical nervous system. May be involved in controlling adhesive processes in keratinizing epithelia. The sequence is that of Homeobox protein BarH-like 2 (BARX2) from Ovis aries (Sheep).